Here is a 376-residue protein sequence, read N- to C-terminus: Cytochrome c oxidase subunit 2, mitochondrial (376 aa).

The chain crosses the membrane as a helical span at residues 164–184; the sequence is IFFFLVQILVFVLWVLSRALW. Over 185–204 the chain is Mitochondrial matrix; it reads CFRSKISPIPQRIVHGTTIE. The chain crosses the membrane as a helical span at residues 205-225; the sequence is ILWTILPSIILMFIAIPSFTL. At 226–376 the chain is on the mitochondrial intermembrane side; sequence LYSMDDVVVD…YGSWVSNQIQ (151 aa). Residues His-309, Cys-344, Glu-346, Cys-348, His-352, and Met-355 each coordinate Cu cation. A Mg(2+)-binding site is contributed by Glu-346.

Belongs to the cytochrome c oxidase subunit 2 family. As to quaternary structure, component of the cytochrome c oxidase (complex IV, CIV), a multisubunit enzyme composed of a catalytic core of 3 subunits and several supernumerary subunits. The complex exists as a monomer or a dimer and forms supercomplexes (SCs) in the inner mitochondrial membrane with ubiquinol-cytochrome c oxidoreductase (cytochrome b-c1 complex, complex III, CIII). Cu cation is required as a cofactor.

It localises to the mitochondrion inner membrane. The catalysed reaction is 4 Fe(II)-[cytochrome c] + O2 + 8 H(+)(in) = 4 Fe(III)-[cytochrome c] + 2 H2O + 4 H(+)(out). Functionally, component of the cytochrome c oxidase, the last enzyme in the mitochondrial electron transport chain which drives oxidative phosphorylation. The respiratory chain contains 3 multisubunit complexes succinate dehydrogenase (complex II, CII), ubiquinol-cytochrome c oxidoreductase (cytochrome b-c1 complex, complex III, CIII) and cytochrome c oxidase (complex IV, CIV), that cooperate to transfer electrons derived from NADH and succinate to molecular oxygen, creating an electrochemical gradient over the inner membrane that drives transmembrane transport and the ATP synthase. Cytochrome c oxidase is the component of the respiratory chain that catalyzes the reduction of oxygen to water. Electrons originating from reduced cytochrome c in the intermembrane space (IMS) are transferred via the dinuclear copper A center (CU(A)) of subunit 2 and heme A of subunit 1 to the active site in subunit 1, a binuclear center (BNC) formed by heme A3 and copper B (CU(B)). The BNC reduces molecular oxygen to 2 water molecules using 4 electrons from cytochrome c in the IMS and 4 protons from the mitochondrial matrix. The polypeptide is Cytochrome c oxidase subunit 2, mitochondrial (COX2) (Vigna unguiculata (Cowpea)).